Here is a 427-residue protein sequence, read N- to C-terminus: Indole diterpene prenyltransferase idtF (427 aa).

6 residues coordinate substrate: Arg-97, Lys-195, Arg-264, Lys-266, Tyr-268, and Tyr-352.

The protein belongs to the tryptophan dimethylallyltransferase family.

The protein operates within secondary metabolite biosynthesis. In terms of biological role, indole diterpene prenyltransferase; part of the gene cluster that mediates the biosynthesis of paspalitrems, indole-diterpene (IDT) mycotoxins that are potent tremorgens in mammals. The geranylgeranyl diphosphate (GGPP) synthase idtG is proposed to catalyze the first step in IDT biosynthesis via catalysis of a series of iterative condensations of isopentenyl diphosphate (IPP) with dimethylallyl diphosphate (DMAPP), geranyl diphosphate (GPP), and farnesyl diphosphate (FPP), to form GGPP. Condensation of indole-3-glycerol phosphate with GGPP by the prenyltransferase idtC then forms 3-geranylgeranylindole (3-GGI). Epoxidation of the two terminal alkenes of the geranylgeranyl moiety by the FAD-dependent monooxygenase idtM, and cyclization by the terpene cyclase idtB then leads to the production of paspaline. The cytochrome P450 monooxygenase idtP then catalyzes oxidative elimination of the pendant methyl group at C-12 of paspaline and generates the C-10 ketone to yield 13-desoxypaxilline. The cytochrome P450 monooxygenase idtQ may catalyze the C-13 oxidation of 13-desoxypaxilline to afford paxilline. Considering that both paspalicine and paxilline were detected in C.paspali, idtQ also catalyzes the formation of paspalinine from 13-desoxypaxilline via paspalicine as an intermediate. Finally, the alpha-prenyltransferase idtF prenylates paspalinine at the C-20 or the C-21 positions to yield paspalitrems A and C, respectively. The hydroxylation of paspalitrem A at C-32 by a still unknown oxidase affords paspalitrem B. The sequence is that of Indole diterpene prenyltransferase idtF from Claviceps paspali (Rye ergot fungus).